Reading from the N-terminus, the 834-residue chain is Ras GTPase-activating protein 3 (834 aa).

C2 domains are found at residues 1–112 and 123–263; these read MAVE…DTWF and VQGK…EAWY. Residue Ala-2 is modified to N-acetylalanine. Tyr-66 carries the phosphotyrosine modification. The residue at position 77 (Ser-77) is a Phosphoserine. Thr-110 is modified (phosphothreonine). In terms of domain architecture, Ras-GAP spans 346–561; that stretch reads GRVVPFISAI…DAVKNFLDLI (216 aa). Positions 576-677 constitute a PH domain; the sequence is ILLKEGFMIK…WIDILTKVSQ (102 aa). Residues 679–715 form a Btk-type zinc finger; it reads NQKRLAVYHPSAYLNGHWLCCRASSDTAAGCSPCTGG. The Zn(2+) site is built by His-687, Cys-698, Cys-699, and Cys-709. Residues 806–834 are disordered; sequence KYGSQEHPIGDKSFQSYIRQQSETPAHSM. 2 positions are modified to phosphoserine: Ser-809 and Ser-833. Positions 818–834 are enriched in polar residues; the sequence is SFQSYIRQQSETPAHSM.

In terms of biological role, inhibitory regulator of the Ras-cyclic AMP pathway. May bind inositol tetrakisphosphate (IP4). The protein is Ras GTPase-activating protein 3 (RASA3) of Bos taurus (Bovine).